A 243-amino-acid chain; its full sequence is Venom protease (243 aa).

A Peptidase S1 domain is found at 1 to 243 (VVGGKPAKLG…DSFILPALKK (243 aa)). A disulfide bond links C34 and C50. Residues H49 and D97 each act as charge relay system in the active site. 2 disulfides stabilise this stretch: C165–C178 and C189–C217. S193 (charge relay system) is an active-site residue.

This sequence belongs to the peptidase S1 family. In terms of tissue distribution, expressed by the venom duct.

The protein resides in the secreted. This is Venom protease from Bombus pensylvanicus (American bumblebee).